Here is a 545-residue protein sequence, read N- to C-terminus: Ubiquitin carboxyl-terminal hydrolase 17-like protein C (545 aa).

The USP domain maps to Cys51–Gln348. Catalysis depends on Cys60, which acts as the Nucleophile. The active-site Proton acceptor is the His307. 2 disordered regions span residues Asp368–Gly442 and Trp489–Gln539. The span at Lys374–Ser385 shows a compositional bias: basic residues. Basic and acidic residues-rich tracts occupy residues Glu393–Lys404 and Trp489–Asp505. Positions Leu508–Leu519 are enriched in polar residues. Residues Gly524–Gln537 show a composition bias toward basic residues.

It belongs to the peptidase C19 family. USP17 subfamily. In terms of tissue distribution, expressed in T cells.

It is found in the nucleus. Its subcellular location is the endoplasmic reticulum. The catalysed reaction is Thiol-dependent hydrolysis of ester, thioester, amide, peptide and isopeptide bonds formed by the C-terminal Gly of ubiquitin (a 76-residue protein attached to proteins as an intracellular targeting signal).. In terms of biological role, deubiquitinating enzyme that removes conjugated ubiquitin from specific proteins to regulate different cellular processes. Important for preimplantation stage embryonic development. The sequence is that of Ubiquitin carboxyl-terminal hydrolase 17-like protein C from Mus musculus (Mouse).